Here is a 527-residue protein sequence, read N- to C-terminus: Secologanin synthase 2 (527 aa).

The Lumenal portion of the chain corresponds to 1 to 11; sequence MEMDMDIIRKA. Residues 12–32 traverse the membrane as a helical segment; the sequence is IAATIFALVMAWAWRVLDWAW. The Cytoplasmic portion of the chain corresponds to 33 to 527; it reads FTPKRIEKRL…IYKKLERQNF (495 aa). Heme is bound at residue Cys-470.

This sequence belongs to the cytochrome P450 family. Heme is required as a cofactor. As to expression, expressed in leaves (especially in leaf epidermis), and, to a lower extent, in roots, stems, flower buds and flowers.

The protein resides in the endoplasmic reticulum membrane. The enzyme catalyses loganin + reduced [NADPH--hemoprotein reductase] + O2 = secologanin + oxidized [NADPH--hemoprotein reductase] + 2 H2O + H(+). It carries out the reaction secologanin + reduced [NADPH--hemoprotein reductase] + O2 = secoxyloganin + oxidized [NADPH--hemoprotein reductase] + H2O + 2 H(+). It functions in the pathway alkaloid biosynthesis. Its function is as follows. Component of the seco-iridoid and derivatives monoterpenoid indole alkaloids (MIAs, e.g. secologanin) biosynthesis pathway. Catalyzes the conversion of loganin into secologanin. Catalyzes the conversion of secologanin into secoxyloganin. This is Secologanin synthase 2 from Catharanthus roseus (Madagascar periwinkle).